The chain runs to 641 residues: Tetracycline resistance protein TetQ (641 aa).

Residues 1–244 (MNIINLGILA…AITSFILPPA (244 aa)) form the tr-type G domain. GTP-binding positions include 10 to 17 (AHIDAGKT), 74 to 78 (DTPGH), and 128 to 131 (NKID).

Belongs to the TRAFAC class translation factor GTPase superfamily. Classic translation factor GTPase family. TetM/TetO subfamily.

Its function is as follows. Abolishes the inhibitory effect of tetracyclin on protein synthesis by a non-covalent modification of the ribosomes. The sequence is that of Tetracycline resistance protein TetQ (tetQ) from Xylanibacter ruminicola (Prevotella ruminicola).